A 225-amino-acid polypeptide reads, in one-letter code: Uracil-DNA glycosylase (225 aa).

Asp-68 acts as the Proton acceptor in catalysis.

Belongs to the uracil-DNA glycosylase (UDG) superfamily. UNG family.

It is found in the cytoplasm. The catalysed reaction is Hydrolyzes single-stranded DNA or mismatched double-stranded DNA and polynucleotides, releasing free uracil.. Excises uracil residues from the DNA which can arise as a result of misincorporation of dUMP residues by DNA polymerase or due to deamination of cytosine. This Parafrankia sp. (strain EAN1pec) protein is Uracil-DNA glycosylase.